The chain runs to 317 residues: Ribonuclease Z (317 aa).

Residues H61, H63, D65, H66, H139, D210, and H268 each coordinate Zn(2+). D65 functions as the Proton acceptor in the catalytic mechanism.

This sequence belongs to the RNase Z family. In terms of assembly, homodimer. The cofactor is Zn(2+).

The enzyme catalyses Endonucleolytic cleavage of RNA, removing extra 3' nucleotides from tRNA precursor, generating 3' termini of tRNAs. A 3'-hydroxy group is left at the tRNA terminus and a 5'-phosphoryl group is left at the trailer molecule.. Inhibited by high salt concentrations. Zinc phosphodiesterase, which displays some tRNA 3'-processing endonuclease activity. Probably involved in tRNA maturation, by removing a 3'-trailer from precursor tRNA. Can also catalyze the 5' end cleavage of the 5S rRNA. The protein is Ribonuclease Z of Haloferax volcanii (strain ATCC 29605 / DSM 3757 / JCM 8879 / NBRC 14742 / NCIMB 2012 / VKM B-1768 / DS2) (Halobacterium volcanii).